We begin with the raw amino-acid sequence, 307 residues long: Ornithine carbamoyltransferase (307 aa).

Carbamoyl phosphate is bound by residues 51 to 54 (STRT), Gln-78, Arg-102, and 129 to 132 (HPCQ). L-ornithine is bound by residues Asn-160, Asp-220, and 224–225 (SM). Carbamoyl phosphate is bound by residues 260–261 (CL) and Arg-288.

This sequence belongs to the aspartate/ornithine carbamoyltransferase superfamily. OTCase family.

The protein localises to the cytoplasm. The enzyme catalyses carbamoyl phosphate + L-ornithine = L-citrulline + phosphate + H(+). The protein operates within amino-acid biosynthesis; L-arginine biosynthesis; L-arginine from L-ornithine and carbamoyl phosphate: step 1/3. Reversibly catalyzes the transfer of the carbamoyl group from carbamoyl phosphate (CP) to the N(epsilon) atom of ornithine (ORN) to produce L-citrulline. The chain is Ornithine carbamoyltransferase (argF) from Archaeoglobus fulgidus (strain ATCC 49558 / DSM 4304 / JCM 9628 / NBRC 100126 / VC-16).